The primary structure comprises 154 residues: Protein X (154 aa).

The segment at 68 to 117 (PCALRFTSARCMETTVNAHQILPKVLHKRTLGLPAMSTTDLEAYFKDCVF) is mitochondrial targeting sequence.

Belongs to the orthohepadnavirus protein X family. As to quaternary structure, may form homodimer. May interact with host CEBPA, CFLAR, CREB1, DDB1, E4F1, HBXIP, HSPD1/HSP60, NFKBIA, POLR2E and SMAD4. Interacts with host SMC5-SMC6 complex and induces its degradation. Interacts with host TRPC4AP; leading to prevent ubiquitination of TRPC4AP. Interacts with host PLSCR1; this interaction promotes ubiquitination and degradation of HBx and impairs HBx-mediated cell proliferation. Post-translationally, a fraction may be phosphorylated in insect cells and HepG2 cells, a human hepatoblastoma cell line. Phosphorylated in vitro by host protein kinase C or mitogen-activated protein kinase. N-acetylated in insect cells.

It localises to the host cytoplasm. Its subcellular location is the host nucleus. The protein localises to the host mitochondrion. Functionally, multifunctional protein that plays a role in silencing host antiviral defenses and promoting viral transcription. Does not seem to be essential for HBV infection. May be directly involved in development of cirrhosis and liver cancer (hepatocellular carcinoma). Most of cytosolic activities involve modulation of cytosolic calcium. The effect on apoptosis is controversial depending on the cell types in which the studies have been conducted. May induce apoptosis by localizing in mitochondria and causing loss of mitochondrial membrane potential. May also modulate apoptosis by binding host CFLAR, a key regulator of the death-inducing signaling complex (DISC). Promotes viral transcription by using the host E3 ubiquitin ligase DDB1 to target the SMC5-SMC6 complex to proteasomal degradation. This host complex would otherwise bind to viral episomal DNA, and prevents its transcription. Moderately stimulates transcription of many different viral and cellular transcription elements. Promoters and enhancers stimulated by HBx contain DNA binding sites for NF-kappa-B, AP-1, AP-2, c-EBP, ATF/CREB, or the calcium-activated factor NF-AT. The protein is Protein X of Hepatitis B virus genotype A2 subtype adw2 (strain Rutter 1979) (HBV-A).